Consider the following 268-residue polypeptide: Tryptophan synthase alpha chain (268 aa).

Residues glutamate 49 and aspartate 60 each act as proton acceptor in the active site.

It belongs to the TrpA family. As to quaternary structure, tetramer of two alpha and two beta chains.

The enzyme catalyses (1S,2R)-1-C-(indol-3-yl)glycerol 3-phosphate + L-serine = D-glyceraldehyde 3-phosphate + L-tryptophan + H2O. It functions in the pathway amino-acid biosynthesis; L-tryptophan biosynthesis; L-tryptophan from chorismate: step 5/5. In terms of biological role, the alpha subunit is responsible for the aldol cleavage of indoleglycerol phosphate to indole and glyceraldehyde 3-phosphate. The chain is Tryptophan synthase alpha chain from Escherichia coli O7:K1 (strain IAI39 / ExPEC).